A 161-amino-acid polypeptide reads, in one-letter code: Putative esterase C31F10.02 (161 aa).

This sequence belongs to the thioesterase PaaI family.

This Schizosaccharomyces pombe (strain 972 / ATCC 24843) (Fission yeast) protein is Putative esterase C31F10.02.